The following is a 259-amino-acid chain: uncharacterized protein (259 aa).

An N-terminal signal peptide occupies residues 1–22 (MKHSKKLLLCISFLLITVFISG). Cys-23 carries N-palmitoyl cysteine lipidation. Cys-23 is lipidated: S-diacylglycerol cysteine.

It belongs to the staphylococcal tandem lipoprotein family.

It is found in the cell membrane. This is an uncharacterized protein from Staphylococcus epidermidis (strain ATCC 35984 / DSM 28319 / BCRC 17069 / CCUG 31568 / BM 3577 / RP62A).